The primary structure comprises 234 residues: Uridylate kinase (234 aa).

9–12 (KLSG) serves as a coordination point for ATP. UMP is bound at residue Gly51. Residues Gly52 and Arg56 each coordinate ATP. Residues Asp71 and 132–139 (CGNPFFTT) contribute to the UMP site. ATP-binding residues include Thr159, Tyr165, and Asp168.

This sequence belongs to the UMP kinase family. Homohexamer.

It is found in the cytoplasm. The catalysed reaction is UMP + ATP = UDP + ADP. It participates in pyrimidine metabolism; CTP biosynthesis via de novo pathway; UDP from UMP (UMPK route): step 1/1. Its activity is regulated as follows. Inhibited by UTP. Its function is as follows. Catalyzes the reversible phosphorylation of UMP to UDP. This is Uridylate kinase from Prochlorococcus marinus (strain MIT 9301).